Here is a 54-residue protein sequence, read N- to C-terminus: MVAWRAAGLNYVRYSQIAAQVVRQCTKGGANVKKPQATLKTTAWENGKMVSKSQ.

This sequence belongs to the eukaryotic ATPase epsilon family. As to quaternary structure, F-type ATPases have 2 components, CF(1) - the catalytic core - and CF(0) - the membrane proton channel. CF(1) has five subunits: alpha(3), beta(3), gamma(1), delta(1), epsilon(1). CF(0) seems to have nine subunits: a, b, c, d, e, f, g, F6 and 8 (or A6L).

The protein localises to the mitochondrion. It is found in the mitochondrion inner membrane. Mitochondrial membrane ATP synthase (F(1)F(0) ATP synthase or Complex V) produces ATP from ADP in the presence of a proton gradient across the membrane which is generated by electron transport complexes of the respiratory chain. F-type ATPases consist of two structural domains, F(1) - containing the extramembraneous catalytic core, and F(0) - containing the membrane proton channel, linked together by a central stalk and a peripheral stalk. During catalysis, ATP synthesis in the catalytic domain of F(1) is coupled via a rotary mechanism of the central stalk subunits to proton translocation. Part of the complex F(1) domain and of the central stalk which is part of the complex rotary element. Rotation of the central stalk against the surrounding alpha(3)beta(3) subunits leads to hydrolysis of ATP in three separate catalytic sites on the beta subunits. The polypeptide is Putative ATP synthase subunit epsilon, mitochondrial (Caenorhabditis elegans).